Reading from the N-terminus, the 319-residue chain is Beta-ketoacyl-[acyl-carrier-protein] synthase III (319 aa).

Active-site residues include Cys-113 and His-246. The segment at Gln-247–Arg-251 is ACP-binding. Asn-276 is an active-site residue.

Belongs to the thiolase-like superfamily. FabH family. Homodimer.

The protein localises to the cytoplasm. The catalysed reaction is malonyl-[ACP] + acetyl-CoA + H(+) = 3-oxobutanoyl-[ACP] + CO2 + CoA. It participates in lipid metabolism; fatty acid biosynthesis. Functionally, catalyzes the condensation reaction of fatty acid synthesis by the addition to an acyl acceptor of two carbons from malonyl-ACP. Catalyzes the first condensation reaction which initiates fatty acid synthesis and may therefore play a role in governing the total rate of fatty acid production. Possesses both acetoacetyl-ACP synthase and acetyl transacylase activities. Its substrate specificity determines the biosynthesis of branched-chain and/or straight-chain of fatty acids. The chain is Beta-ketoacyl-[acyl-carrier-protein] synthase III from Ehrlichia chaffeensis (strain ATCC CRL-10679 / Arkansas).